Consider the following 357-residue polypeptide: Peptide chain release factor 1 (357 aa).

Gln-235 is subject to N5-methylglutamine.

The protein belongs to the prokaryotic/mitochondrial release factor family. Post-translationally, methylated by PrmC. Methylation increases the termination efficiency of RF1.

Its subcellular location is the cytoplasm. In terms of biological role, peptide chain release factor 1 directs the termination of translation in response to the peptide chain termination codons UAG and UAA. In Alkaliphilus metalliredigens (strain QYMF), this protein is Peptide chain release factor 1.